The sequence spans 142 residues: Group IIE secretory phospholipase A2 (142 aa).

An N-terminal signal peptide occupies residues 1–19 (MKPPIALACLCLLVPLAGG). 5 residues coordinate Ca(2+): aspartate 41, glycine 43, tyrosine 45, glycine 47, and glycine 49. 7 disulfide bridges follow: cysteine 44-cysteine 135, cysteine 46-cysteine 62, cysteine 61-cysteine 115, cysteine 67-cysteine 142, cysteine 68-cysteine 108, cysteine 77-cysteine 101, and cysteine 95-cysteine 106. Histidine 65 is a catalytic residue. Aspartate 66 contacts Ca(2+). Aspartate 109 is an active-site residue. Residues tyrosine 130 and asparagine 132 each coordinate Ca(2+).

It belongs to the phospholipase A2 family. Ca(2+) is required as a cofactor. Highly expressed in skin and uterus, and at lower levels in various other tissues. Expressed in hair follicles, specifically localized in companion cells of the outer root sheath and cuticular cells of the inner root sheath in hair follicles during anagen. Expressed in white and brown adipose tissue.

It is found in the secreted. The protein resides in the cytoplasm. It catalyses the reaction a 1,2-diacyl-sn-glycero-3-phosphoethanolamine + H2O = a 1-acyl-sn-glycero-3-phosphoethanolamine + a fatty acid + H(+). The enzyme catalyses 1-hexadecanoyl-2-(9Z-octadecenoyl)-sn-glycero-3-phosphoethanolamine + H2O = 1-hexadecanoyl-sn-glycero-3-phosphoethanolamine + (9Z)-octadecenoate + H(+). It carries out the reaction 1-hexadecanoyl-2-(9Z,12Z-octadecadienoyl)-sn-glycero-3-phosphoethanolamine + H2O = 1-hexadecanoyl-sn-glycero-3-phosphoethanolamine + (9Z,12Z)-octadecadienoate + H(+). The catalysed reaction is 1-hexadecanoyl-2-(5Z,8Z,11Z,14Z-eicosatetraenoyl)-sn-glycero-3-phosphoethanolamine + H2O = 1-hexadecanoyl-sn-glycero-3-phosphoethanolamine + (5Z,8Z,11Z,14Z)-eicosatetraenoate + H(+). It catalyses the reaction 1,2-dihexadecanoyl-sn-glycero-3-phospho-(1'-sn-glycerol) + H2O = 1-hexadecanoyl-sn-glycero-3-phospho-(1'-sn-glycerol) + hexadecanoate + H(+). The enzyme catalyses 1-hexadecanoyl-2-(9Z-octadecenoyl)-sn-glycero-3-phosphoglycerol + H2O = 1-hexadecanoyl-sn-glycero-3-phosphoglycerol + (9Z)-octadecenoate + H(+). It carries out the reaction a 1,2-diacyl-sn-glycero-3-phosphocholine + H2O = a 1-acyl-sn-glycero-3-phosphocholine + a fatty acid + H(+). The catalysed reaction is 1,2-dihexadecanoyl-sn-glycero-3-phosphocholine + H2O = 1-hexadecanoyl-sn-glycero-3-phosphocholine + hexadecanoate + H(+). It catalyses the reaction 1-hexadecanoyl-2-(9Z-octadecenoyl)-sn-glycero-3-phosphocholine + H2O = 1-hexadecanoyl-sn-glycero-3-phosphocholine + (9Z)-octadecenoate + H(+). The enzyme catalyses 1-hexadecanoyl-2-(9Z,12Z-octadecadienoyl)-sn-glycero-3-phosphocholine + H2O = (9Z,12Z)-octadecadienoate + 1-hexadecanoyl-sn-glycero-3-phosphocholine + H(+). It carries out the reaction 1-hexadecanoyl-2-(4Z,7Z,10Z,13Z,16Z,19Z-docosahexaenoyl)-sn-glycero-3-phosphocholine + H2O = (4Z,7Z,10Z,13Z,16Z,19Z)-docosahexaenoate + 1-hexadecanoyl-sn-glycero-3-phosphocholine + H(+). Functionally, secretory calcium-dependent phospholipase A2 that primarily targets extracellular phospholipids. Hydrolyzes the ester bond of the fatty acyl group attached at sn-2 position of phospholipids (phospholipase A2 activity), releasing various unsaturated fatty acids including oleoate, linoleoate, arachidonate, docosahexaenoate and lysophosphatidylethanolamines in preference to lysophosphatidylcholines. In response to high-fat diet, hydrolyzes minor lipoprotein phospholipids including phosphatidylserines, phosphatidylinositols and phosphatidylglycerols, altering lipoprotein composition and fat storage in adipose tissue and liver. May act in an autocrine and paracrine manner. Contributes to lipid remodeling of cellular membranes and generation of lipid mediators involved in pathogen clearance. Cleaves sn-2 fatty acyl chains of phosphatidylglycerols and phosphatidylethanolamines, which are major components of membrane phospholipids in bacteria. Acts as a hair follicle phospholipase A2. Selectively releases lysophosphatidylethanolamines (LPE) and various unsaturated fatty acids in skin to regulate hair follicle homeostasis. May regulate the inflammatory response by releasing arachidonate, a precursor of prostaglandins and leukotrienes. Upon allergen exposure, may participate in allergic inflammatory response by enhancing leukotriene C4 synthesis and degranulation in mast cells. The chain is Group IIE secretory phospholipase A2 (Pla2g2e) from Mus musculus (Mouse).